A 128-amino-acid polypeptide reads, in one-letter code: Large ribosomal subunit protein bL19 (128 aa).

It belongs to the bacterial ribosomal protein bL19 family.

Its function is as follows. This protein is located at the 30S-50S ribosomal subunit interface and may play a role in the structure and function of the aminoacyl-tRNA binding site. The chain is Large ribosomal subunit protein bL19 from Herminiimonas arsenicoxydans.